Consider the following 744-residue polypeptide: Collagen alpha-1(VIII) chain (744 aa).

The first 27 residues, 1-27 (MAVPPGPPQLLQVLLTISLGSIRLIQA), serve as a signal peptide directing secretion. The segment at 29–117 (AYYGIKPLPP…GKEIPLASLR (89 aa)) is nonhelical region (NC2). Basic and acidic residues predominate over residues 101 to 110 (KEAVPKKGKE). Disordered regions lie at residues 101 to 435 (KEAV…GLQG) and 478 to 584 (LLGP…QGEY). Residues 118–571 (GEQGPRGEPG…PGPPGPPGPP (454 aa)) form a triple-helical region region. Pro residues predominate over residues 128 to 137 (PRGPPGPPGL). Positions 168-190 (KPGAMGMPGAKGEIGPKGEIGPM) are enriched in low complexity. The span at 203 to 217 (GLPGIGKPGGPGLPG) shows a compositional bias: gly residues. Positions 288-298 (KPGPPGEPGPQ) are enriched in pro residues. The span at 328-337 (GFPGGKGEQG) shows a compositional bias: gly residues. Residues 389 to 403 (PGEPGLPGIPGPMGP) show a composition bias toward pro residues. The span at 411 to 420 (GPKGEGGIVG) shows a compositional bias: gly residues. 2 stretches are compositionally biased toward low complexity: residues 478 to 506 (LLGP…TGPS) and 540 to 556 (LHGP…QGQP). Residues 558 to 579 (LPGPPGPPGPPGPPAVMPPTPA) are compositionally biased toward pro residues. The segment at 572-744 (AVMPPTPAPQ…SFSGYLLYPM (173 aa)) is nonhelical region (NC1). One can recognise a C1q domain in the interval 611-744 (PAYEMPAFTA…SFSGYLLYPM (134 aa)).

Homotrimers, or heterotrimers in association with alpha 2(VIII) type collagens. Four homotrimers can form a tetrahedron stabilized by central interacting C-terminal NC1 trimers. Post-translationally, prolines at the third position of the tripeptide repeating unit (G-X-Y) are hydroxylated in some or all of the chains. In terms of processing, proteolytically cleaved by neutrophil elastase, in vitro. Proteolytic processing produces the C-terminal NC1 domain fragment, vastatin.

Its subcellular location is the secreted. It is found in the extracellular space. It localises to the extracellular matrix. The protein resides in the basement membrane. In terms of biological role, macromolecular component of the subendothelium. Major component of the Descemet's membrane (basement membrane) of corneal endothelial cells. Also a component of the endothelia of blood vessels. Necessary for migration and proliferation of vascular smooth muscle cells and thus, has a potential role in the maintenance of vessel wall integrity and structure, in particular in atherogenesis. Vastatin, the C-terminal fragment comprising the NC1 domain, inhibits aortic endothelial cell proliferation and causes cell apoptosis. This chain is Collagen alpha-1(VIII) chain (COL8A1), found in Oryctolagus cuniculus (Rabbit).